Consider the following 139-residue polypeptide: Acyl carrier protein 5, chloroplastic (139 aa).

Residues Met-1–Ser-54 constitute a chloroplast transit peptide. One can recognise a Carrier domain in the interval Gln-59–Val-134. Position 94 is an O-(pantetheine 4'-phosphoryl)serine (Ser-94).

This sequence belongs to the acyl carrier protein (ACP) family. 4'-phosphopantetheine is transferred from CoA to a specific serine of apo-ACP by acpS. This modification is essential for activity because fatty acids are bound in thioester linkage to the sulfhydryl of the prosthetic group.

Its subcellular location is the plastid. The protein resides in the chloroplast. Its function is as follows. Carrier of the growing fatty acid chain in fatty acid biosynthesis. The chain is Acyl carrier protein 5, chloroplastic (ACP5) from Arabidopsis thaliana (Mouse-ear cress).